The chain runs to 119 residues: Beta-2-microglobulin (119 aa).

A signal peptide spans 1-20; the sequence is MARLVVVALLVLLCLSGLEA. The 90-residue stretch at 25–114 folds into the Ig-like C1-type domain; it reads PKIQVYSRHP…VTFTAPKTVK (90 aa). The cysteines at positions 45 and 100 are disulfide-linked.

It belongs to the beta-2-microglobulin family. As to quaternary structure, heterodimer of an alpha chain and a beta chain. Beta-2-microglobulin is the beta-chain of major histocompatibility complex class I molecules.

The protein localises to the secreted. In terms of biological role, component of the class I major histocompatibility complex (MHC). Involved in the presentation of peptide antigens to the immune system. The polypeptide is Beta-2-microglobulin (B2M) (Chiropotes satanas (Brown-bearded saki)).